The sequence spans 161 residues: Probable ubiquitin-conjugating enzyme E2 16 (161 aa).

The UBC core domain maps to 15–161; that stretch reads IATNRLQKEL…TRWWFHDDKV (147 aa). Catalysis depends on cysteine 99, which acts as the Glycyl thioester intermediate.

Belongs to the ubiquitin-conjugating enzyme family.

It carries out the reaction S-ubiquitinyl-[E1 ubiquitin-activating enzyme]-L-cysteine + [E2 ubiquitin-conjugating enzyme]-L-cysteine = [E1 ubiquitin-activating enzyme]-L-cysteine + S-ubiquitinyl-[E2 ubiquitin-conjugating enzyme]-L-cysteine.. Its pathway is protein modification; protein ubiquitination. Its function is as follows. Accepts the ubiquitin from the E1 complex and catalyzes its covalent attachment to other proteins. The polypeptide is Probable ubiquitin-conjugating enzyme E2 16 (UBC16) (Arabidopsis thaliana (Mouse-ear cress)).